The following is a 341-amino-acid chain: Cysteine-rich with EGF-like domain protein 2 (341 aa).

Residues 1–24 (MLLSCSIFRLFCIILLLQLGSIYT) form the signal peptide. One can recognise an EGF-like domain in the interval 136 to 178 (DCNTCIGGADRPCHGNGKCDGDGTRAGNGKCSCDEGYDGEFCL). Cystine bridges form between C140–C154, C148–C166, and C168–C177. N-linked (GlcNAc...) asparagine glycosylation is present at N190. 2 FU repeats span residues 193–248 (FFLC…DQYC) and 254–308 (SFSC…NQHC). An EGF-like 2; calcium-binding; truncated domain is found at 291–317 (DIDECTEDPASCSDNQHCLNTDGSFSC).

Belongs to the CRELD family.

The protein localises to the secreted. Its subcellular location is the endoplasmic reticulum. In terms of biological role, possible role in neuronal acetylcholine receptor transport. The protein is Cysteine-rich with EGF-like domain protein 2 (creld2) of Danio rerio (Zebrafish).